A 531-amino-acid polypeptide reads, in one-letter code: UDP-glucuronosyltransferase 2B13 (531 aa).

An N-terminal signal peptide occupies residues 1–24 (MPVKCISVLLLLLQLSCCFSSGSC). N-linked (GlcNAc...) asparagine glycosylation is found at Asn69, Asn101, and Asn317. Residues 495–511 (VIGFLLACVAITTYLIV) traverse the membrane as a helical segment.

This sequence belongs to the UDP-glycosyltransferase family.

It is found in the microsome membrane. The protein localises to the endoplasmic reticulum membrane. The enzyme catalyses glucuronate acceptor + UDP-alpha-D-glucuronate = acceptor beta-D-glucuronoside + UDP + H(+). In terms of biological role, UDPGT is of major importance in the conjugation and subsequent elimination of potentially toxic xenobiotics and endogenous compounds. Acts on small phenolic agents such as 2-beta-naphthol and 4-methylumbelliferone as well as bulky phenolic compounds like 2-hydroxy- and 4-hydroxybiphenyl. In contrast to 2B16 it is active toward octylgallate. This is UDP-glucuronosyltransferase 2B13 (UGT2B13) from Oryctolagus cuniculus (Rabbit).